The primary structure comprises 284 residues: 2-dehydro-3-deoxyphosphooctonate aldolase (284 aa).

This sequence belongs to the KdsA family.

The protein resides in the cytoplasm. The catalysed reaction is D-arabinose 5-phosphate + phosphoenolpyruvate + H2O = 3-deoxy-alpha-D-manno-2-octulosonate-8-phosphate + phosphate. It participates in carbohydrate biosynthesis; 3-deoxy-D-manno-octulosonate biosynthesis; 3-deoxy-D-manno-octulosonate from D-ribulose 5-phosphate: step 2/3. It functions in the pathway bacterial outer membrane biogenesis; lipopolysaccharide biosynthesis. This chain is 2-dehydro-3-deoxyphosphooctonate aldolase, found in Photorhabdus laumondii subsp. laumondii (strain DSM 15139 / CIP 105565 / TT01) (Photorhabdus luminescens subsp. laumondii).